Here is a 231-residue protein sequence, read N- to C-terminus: Endonuclease NucS (231 aa).

The protein belongs to the NucS endonuclease family.

It is found in the cytoplasm. Cleaves both 3' and 5' ssDNA extremities of branched DNA structures. The chain is Endonuclease NucS from Micrococcus luteus (strain ATCC 4698 / DSM 20030 / JCM 1464 / CCM 169 / CCUG 5858 / IAM 1056 / NBRC 3333 / NCIMB 9278 / NCTC 2665 / VKM Ac-2230) (Micrococcus lysodeikticus).